The primary structure comprises 498 residues: ATP synthase subunit beta, chloroplastic (498 aa).

An ATP-binding site is contributed by 172-179 (GGAGVGKT).

Belongs to the ATPase alpha/beta chains family. In terms of assembly, F-type ATPases have 2 components, CF(1) - the catalytic core - and CF(0) - the membrane proton channel. CF(1) has five subunits: alpha(3), beta(3), gamma(1), delta(1), epsilon(1). CF(0) has four main subunits: a(1), b(1), b'(1) and c(9-12).

The protein localises to the plastid. Its subcellular location is the chloroplast thylakoid membrane. The catalysed reaction is ATP + H2O + 4 H(+)(in) = ADP + phosphate + 5 H(+)(out). Its function is as follows. Produces ATP from ADP in the presence of a proton gradient across the membrane. The catalytic sites are hosted primarily by the beta subunits. The chain is ATP synthase subunit beta, chloroplastic from Saccharum hybrid (Sugarcane).